Here is a 284-residue protein sequence, read N- to C-terminus: Acetylglutamate kinase (284 aa).

Substrate is bound by residues 64–65, Arg-86, and Asn-177; that span reads GG.

The protein belongs to the acetylglutamate kinase family. ArgB subfamily.

Its subcellular location is the cytoplasm. The catalysed reaction is N-acetyl-L-glutamate + ATP = N-acetyl-L-glutamyl 5-phosphate + ADP. Its pathway is amino-acid biosynthesis; L-arginine biosynthesis; N(2)-acetyl-L-ornithine from L-glutamate: step 2/4. In terms of biological role, catalyzes the ATP-dependent phosphorylation of N-acetyl-L-glutamate. The sequence is that of Acetylglutamate kinase from Haemophilus ducreyi (strain 35000HP / ATCC 700724).